We begin with the raw amino-acid sequence, 695 residues long: Testis-specific Y-encoded-like protein 2 (695 aa).

Residues 1 to 56 (MDRPDEGPPAKTRRLSSSESPQRDPPPPPPPPPLLRLPLPPPQQRPRLQEETEAAQ) are disordered. Residue Lys11 forms a Glycyl lysine isopeptide (Lys-Gly) (interchain with G-Cter in SUMO2) linkage. 2 positions are modified to phosphoserine: Ser18 and Ser20. Over residues 23 to 44 (RDPPPPPPPPPLLRLPLPPPQQ) the composition is skewed to pro residues. Glycyl lysine isopeptide (Lys-Gly) (interchain with G-Cter in SUMO2) cross-links involve residues Lys163 and Lys165. A disordered region spans residues 175–207 (EDEDEQESMRSSRRRRRRRRRKQRKVKRESRQR). Positions 185–202 (SSRRRRRRRRRKQRKVKR) are enriched in basic residues. At Thr340 the chain carries Phosphothreonine. 2 disordered regions span residues 471-603 (DINE…RDIE) and 632-695 (VEEE…GKTG). Basic and acidic residues predominate over residues 481–491 (SPDHDEVRNET). The segment covering 496-518 (ESADDNETTDNNESADDNNENPE) has biased composition (acidic residues). Residues 519-535 (DNNKNADDNKENPDNNK) show a composition bias toward basic and acidic residues. Over residues 539–557 (GNNFFNGGFWGSHGNNQDS) the composition is skewed to low complexity. 2 stretches are compositionally biased toward acidic residues: residues 558–601 (SDSD…DDRD) and 632–677 (VEEE…DLED). A phosphoserine mark is found at Ser670 and Ser673.

It belongs to the nucleosome assembly protein (NAP) family. As to quaternary structure, interacts with histones. Interacts with CASK. Part of a complex containing CASK, TBR1 and TSPYL2. Post-translationally, phosphorylation at Ser-20 and/or Thr-340 impairs function on cell proliferation. Ubiquitously expressed, with highest levels in testis, adrenal gland, cerebral cortex, ovary, skeletal muscle and spleen. Present in testis, adrenal gland, cerebral cortex and ovary (at protein level).

The protein localises to the nucleus. It is found in the cytoplasm. Its function is as follows. Part of the CASK/TBR1/TSPYL2 transcriptional complex which modulates gene expression in response to neuronal synaptic activity, probably by facilitating nucleosome assembly. May inhibit cell proliferation by inducing p53-dependent CDKN1A expression. This is Testis-specific Y-encoded-like protein 2 (TSPYL2) from Macaca fascicularis (Crab-eating macaque).